The following is a 364-amino-acid chain: S-adenosylmethionine:tRNA ribosyltransferase-isomerase (364 aa).

This sequence belongs to the QueA family. Monomer.

It localises to the cytoplasm. It carries out the reaction 7-aminomethyl-7-carbaguanosine(34) in tRNA + S-adenosyl-L-methionine = epoxyqueuosine(34) in tRNA + adenine + L-methionine + 2 H(+). It functions in the pathway tRNA modification; tRNA-queuosine biosynthesis. In terms of biological role, transfers and isomerizes the ribose moiety from AdoMet to the 7-aminomethyl group of 7-deazaguanine (preQ1-tRNA) to give epoxyqueuosine (oQ-tRNA). In Synechococcus sp. (strain CC9902), this protein is S-adenosylmethionine:tRNA ribosyltransferase-isomerase.